We begin with the raw amino-acid sequence, 473 residues long: Photosystem II CP43 reaction center protein (473 aa).

The propeptide occupies 1–14 (MKTLYSLRRFYPVE). T15 carries the post-translational modification N-acetylthreonine. T15 bears the Phosphothreonine mark. 5 helical membrane-spanning segments follow: residues 69 to 93 (LFEV…PHLA), 134 to 155 (LLGP…KDRN), 178 to 200 (KALY…RKIT), 255 to 275 (KPFA…LSYS), and 291 to 312 (WFNN…ASQA). [CaMn4O5] cluster is bound at residue E367. Residues 447 to 471 (RARAAAAGFEKGIDRDLEPVLSMTP) traverse the membrane as a helical segment.

It belongs to the PsbB/PsbC family. PsbC subfamily. In terms of assembly, PSII is composed of 1 copy each of membrane proteins PsbA, PsbB, PsbC, PsbD, PsbE, PsbF, PsbH, PsbI, PsbJ, PsbK, PsbL, PsbM, PsbT, PsbX, PsbY, PsbZ, Psb30/Ycf12, at least 3 peripheral proteins of the oxygen-evolving complex and a large number of cofactors. It forms dimeric complexes. The cofactor is Binds multiple chlorophylls and provides some of the ligands for the Ca-4Mn-5O cluster of the oxygen-evolving complex. It may also provide a ligand for a Cl- that is required for oxygen evolution. PSII binds additional chlorophylls, carotenoids and specific lipids..

It is found in the plastid. Its subcellular location is the chloroplast thylakoid membrane. Functionally, one of the components of the core complex of photosystem II (PSII). It binds chlorophyll and helps catalyze the primary light-induced photochemical processes of PSII. PSII is a light-driven water:plastoquinone oxidoreductase, using light energy to abstract electrons from H(2)O, generating O(2) and a proton gradient subsequently used for ATP formation. The sequence is that of Photosystem II CP43 reaction center protein from Acorus calamus var. americanus (American sweet flag).